We begin with the raw amino-acid sequence, 120 residues long: Ribonuclease P protein component (120 aa).

The protein belongs to the RnpA family. As to quaternary structure, consists of a catalytic RNA component (M1 or rnpB) and a protein subunit.

It carries out the reaction Endonucleolytic cleavage of RNA, removing 5'-extranucleotides from tRNA precursor.. RNaseP catalyzes the removal of the 5'-leader sequence from pre-tRNA to produce the mature 5'-terminus. It can also cleave other RNA substrates such as 4.5S RNA. The protein component plays an auxiliary but essential role in vivo by binding to the 5'-leader sequence and broadening the substrate specificity of the ribozyme. The sequence is that of Ribonuclease P protein component from Dictyoglomus thermophilum (strain ATCC 35947 / DSM 3960 / H-6-12).